Here is a 106-residue protein sequence, read N- to C-terminus: Small ribosomal subunit protein uS10 (106 aa).

This sequence belongs to the universal ribosomal protein uS10 family. In terms of assembly, part of the 30S ribosomal subunit.

Its function is as follows. Involved in the binding of tRNA to the ribosomes. The sequence is that of Small ribosomal subunit protein uS10 from Synechococcus sp. (strain WH7803).